Consider the following 176-residue polypeptide: Cathelicidin-2 (176 aa).

Residues 1-29 form the signal peptide; that stretch reads METQGASLSLGRWSLWLLLLGLVLPSASA. Q30 carries the pyrrolidone carboxylic acid modification. A propeptide spanning residues 30–130 is cleaved from the precursor; sequence QALSYREAVL…DINCNELQSV (101 aa). 2 cysteine pairs are disulfide-bonded: C85–C96 and C107–C124. Residues 135–176 are disordered; it reads PIRRPPIRPPFRPPFRPPVRPPIRPPFRPPFRPPIGPFPGRR. Over residues 141–176 the composition is skewed to pro residues; it reads IRPPFRPPFRPPVRPPIRPPFRPPFRPPIGPFPGRR. At P173 the chain carries Proline amide. A propeptide spans 174 to 176 (removed in mature form); that stretch reads GRR.

Belongs to the cathelicidin family. Post-translationally, elastase is responsible for its maturation.

It localises to the secreted. Binds to the lipid A moiety of bacterial lipipolysaccharides (LPS), a glycolipid present in the outer membrane of all Gram-negative bacteria. Potent antimicrobial activity. This chain is Cathelicidin-2 (CATHL2), found in Ovis aries (Sheep).